Reading from the N-terminus, the 57-residue chain is uncharacterized protein (57 aa).

Residues 34–57 (QGKRGETEGQIEISRKAGHPAPAF) are disordered.

This is an uncharacterized protein from Saccharomyces cerevisiae (strain ATCC 204508 / S288c) (Baker's yeast).